The following is a 211-amino-acid chain: Orotate phosphoribosyltransferase (211 aa).

Residues R103, K107, H109, and 129 to 137 contribute to the 5-phospho-alpha-D-ribose 1-diphosphate site; that span reads EDLISTGKS. S133 is an orotate binding site.

Belongs to the purine/pyrimidine phosphoribosyltransferase family. PyrE subfamily. Homodimer. It depends on Mg(2+) as a cofactor.

The catalysed reaction is orotidine 5'-phosphate + diphosphate = orotate + 5-phospho-alpha-D-ribose 1-diphosphate. It participates in pyrimidine metabolism; UMP biosynthesis via de novo pathway; UMP from orotate: step 1/2. Catalyzes the transfer of a ribosyl phosphate group from 5-phosphoribose 1-diphosphate to orotate, leading to the formation of orotidine monophosphate (OMP). The sequence is that of Orotate phosphoribosyltransferase from Fusobacterium nucleatum subsp. nucleatum (strain ATCC 25586 / DSM 15643 / BCRC 10681 / CIP 101130 / JCM 8532 / KCTC 2640 / LMG 13131 / VPI 4355).